Consider the following 158-residue polypeptide: Large ribosomal subunit protein uL15 (158 aa).

Basic and acidic residues predominate over residues Met1 to Thr13. Positions Met1–Ala45 are disordered. The span at Arg21–Val35 shows a compositional bias: gly residues.

The protein belongs to the universal ribosomal protein uL15 family. As to quaternary structure, part of the 50S ribosomal subunit.

Functionally, binds to the 23S rRNA. This chain is Large ribosomal subunit protein uL15, found in Rhizobium johnstonii (strain DSM 114642 / LMG 32736 / 3841) (Rhizobium leguminosarum bv. viciae).